A 656-amino-acid chain; its full sequence is Macrolide export ATP-binding/permease protein MacB (656 aa).

One can recognise an ABC transporter domain in the interval 20 to 258 (IELAGITRSF…EPDFAPHVDR (239 aa)). An ATP-binding site is contributed by 56-63 (GASGSGKS). The next 4 membrane-spanning stretches (helical) occupy residues 284-304 (ALTL…LAIG), 531-551 (LTIL…IGVM), 591-611 (ALGG…IALF), and 619-639 (LLPV…FGYL).

This sequence belongs to the ABC transporter superfamily. Macrolide exporter (TC 3.A.1.122) family. As to quaternary structure, homodimer.

It is found in the cell inner membrane. Functionally, non-canonical ABC transporter that contains transmembrane domains (TMD), which form a pore in the inner membrane, and an ATP-binding domain (NBD), which is responsible for energy generation. Confers resistance against macrolides. In Azoarcus sp. (strain BH72), this protein is Macrolide export ATP-binding/permease protein MacB.